The primary structure comprises 266 residues: Type III pantothenate kinase (266 aa).

Residue 6–13 (DIGNSRIK) participates in ATP binding. Substrate is bound by residues Tyr94 and 101–104 (GIDR). Asp103 functions as the Proton acceptor in the catalytic mechanism. Residue Asp128 coordinates K(+). Thr131 provides a ligand contact to ATP. Thr183 lines the substrate pocket.

The protein belongs to the type III pantothenate kinase family. As to quaternary structure, homodimer. The cofactor is NH4(+). K(+) serves as cofactor.

The protein resides in the cytoplasm. The catalysed reaction is (R)-pantothenate + ATP = (R)-4'-phosphopantothenate + ADP + H(+). It functions in the pathway cofactor biosynthesis; coenzyme A biosynthesis; CoA from (R)-pantothenate: step 1/5. Catalyzes the phosphorylation of pantothenate (Pan), the first step in CoA biosynthesis. The polypeptide is Type III pantothenate kinase (Nitrosococcus oceani (strain ATCC 19707 / BCRC 17464 / JCM 30415 / NCIMB 11848 / C-107)).